A 188-amino-acid chain; its full sequence is Elongation factor P (188 aa).

The protein belongs to the elongation factor P family.

The protein localises to the cytoplasm. Its pathway is protein biosynthesis; polypeptide chain elongation. Involved in peptide bond synthesis. Stimulates efficient translation and peptide-bond synthesis on native or reconstituted 70S ribosomes in vitro. Probably functions indirectly by altering the affinity of the ribosome for aminoacyl-tRNA, thus increasing their reactivity as acceptors for peptidyl transferase. This chain is Elongation factor P, found in Natranaerobius thermophilus (strain ATCC BAA-1301 / DSM 18059 / JW/NM-WN-LF).